The chain runs to 75 residues: Lividin-3 (75 aa).

The signal sequence occupies residues 1–22 (MFTLKKSLLLLFFLGTISLSLC). Residues 23–40 (EEERDADEDEGEMTEEEV) constitute a propeptide that is removed on maturation. A disulfide bond links Cys-69 and Cys-75.

In terms of tissue distribution, expressed by the skin glands.

Its subcellular location is the secreted. In terms of biological role, antimicrobial peptide. The chain is Lividin-3 from Odorrana livida (Green mountain frog).